A 1054-amino-acid polypeptide reads, in one-letter code: Filament-like plant protein 6 (1054 aa).

Coiled coils occupy residues 64-139 (VQIK…VKQH), 174-200 (AEDRAAHLDGALKECMRQIRNLKKDHE), and 250-341 (SNML…RKKL). Disordered stretches follow at residues 359–390 (RDSGDARQKRSPVKVSSPCKSPGGYSSTGSEF) and 448–506 (EAQL…KEKD). 3 stretches are compositionally biased toward low complexity: residues 371–380 (VKVSSPCKSP), 450–461 (QLQQNNSQKSSL), and 470–494 (SNPSSSISVSEDGNDDSGSCSGSLS). Positions 389-463 (EFSLDNAQKF…NNSQKSSLEV (75 aa)) form a coiled coil. 2 coiled-coil regions span residues 637-666 (QNLVEDCHLAEQKLQSIHQDLKNAVSRIHD) and 788-944 (ESDS…IFVL). Residues 951–1054 (FRPQPEQMRS…SRFFSSKSGY (104 aa)) are disordered. Over residues 1007–1032 (PSDSETSDTTTSPSRVGSRLSRSGSS) the composition is skewed to low complexity.

The protein belongs to the FPP family. As to quaternary structure, interacts with WPP/MAF proteins.

This chain is Filament-like plant protein 6 (FPP6), found in Arabidopsis thaliana (Mouse-ear cress).